Consider the following 290-residue polypeptide: Polyamine aminopropyltransferase (290 aa).

One can recognise a PABS domain in the interval 5-238 (QLWYEKLHSS…GIMTFAWASE (234 aa)). Glutamine 33 provides a ligand contact to S-methyl-5'-thioadenosine. Positions 64 and 88 each coordinate spermidine. Residues glutamate 108 and 140–141 (DG) contribute to the S-methyl-5'-thioadenosine site. Aspartate 158 (proton acceptor) is an active-site residue. Residue 158-161 (DSTD) coordinates spermidine. Proline 165 provides a ligand contact to S-methyl-5'-thioadenosine.

The protein belongs to the spermidine/spermine synthase family. In terms of assembly, homodimer or homotetramer.

The protein localises to the cytoplasm. It catalyses the reaction S-adenosyl 3-(methylsulfanyl)propylamine + putrescine = S-methyl-5'-thioadenosine + spermidine + H(+). The protein operates within amine and polyamine biosynthesis; spermidine biosynthesis; spermidine from putrescine: step 1/1. Its function is as follows. Catalyzes the irreversible transfer of a propylamine group from the amino donor S-adenosylmethioninamine (decarboxy-AdoMet) to putrescine (1,4-diaminobutane) to yield spermidine. The polypeptide is Polyamine aminopropyltransferase (Hamiltonella defensa subsp. Acyrthosiphon pisum (strain 5AT)).